Here is a 354-residue protein sequence, read N- to C-terminus: Erythroferrone (354 aa).

The first 28 residues, Met1–Gly28, serve as a signal peptide directing secretion. 2 stretches are compositionally biased toward low complexity: residues Gly26–Arg37 and Pro51–Ala62. A disordered region spans residues Gly26–Pro123. The span at Thr69–Asp80 shows a compositional bias: basic and acidic residues. Residues Asn94 to Lys107 are compositionally biased toward basic residues. A hydroxyproline mark is found at Pro111, Pro113, Pro114, Pro116, Pro117, and Pro119. The segment covering Pro111 to Pro123 has biased composition (pro residues). One can recognise a C1q domain in the interval Ala199–Val354. N-linked (GlcNAc...) asparagine glycosylation is found at Asn243, Asn295, and Asn333.

Belongs to the adipolin/erythroferrone family. As to quaternary structure, homodimer; disulfide-linked. Forms trimer, hexamers and higher molecular weight oligomers. May form heteromeric complexes with C1QTNF2 and C1QTNF12 and, to a lesser extent, with C1QTNF5 and C1QTNF10. Interacts with BMP5 and BMP7; the interaction inhibits BMP-induced transcription of HAMP. Interacts with BMP6; the interaction inhibits BMP-induced transcription of HAMP. Interacts with BMP2. Interacts with heterodimers composed of BMP2 and BMP6 in vitro, the interaction inhibits the heterodimer binding to its receptor BMPR1A /ALK3 and thereby suppresses expression of HAMP. N-glycosylated; required for secretion of the mature protein.

It is found in the secreted. Functionally, iron-regulatory hormone that acts as an erythroid regulator after hemorrhage: produced by erythroblasts following blood loss and mediates suppression of hepcidin (HAMP) expression in the liver, thereby promoting increased iron absorption and mobilization from stores. Promotes lipid uptake into adipocytes and hepatocytes via transcriptional up-regulation of genes involved in fatty acid uptake. Inhibits apoptosis and inflammatory response in cardiomyocytes via promotion of sphingosine-1-phosphate (S1P) and cAMP-dependent activation of AKT signaling. Inhibits autophagy induced by nutrient deficiency in hepatocytes via promoting the phosphorylation of IRS1, AKT, and MTOR, and thereby subsequent activation of the AKT-MTOR signaling pathway. Negatively regulates the differentiation of osteoblasts, potentially via sequestering BMP2, and thereby inhibits the activation of SMAD signaling. The reduction in BMP2 signaling in osteoblasts also results in an increase in expression of the osteoclastogenesis-promoting factors TNFSF11/RANKL and SOST, thereby indirectly promotes bone resorption. This Homo sapiens (Human) protein is Erythroferrone.